The sequence spans 296 residues: MCAERLGQFVTLALVFATLDPAQGTDSTNPPEGPQDRSSQQKGRLSLQNTAEIQHCLVNAGDVGCGVFECFENNSCEIQGLHGICMTFLHNAGKFDAQGKSFIKDALRCKAHALRHKFGCISRKCPAIREMVFQLQRECYLKHDLCSAAQENVGVIVEMIHFKDLLLHEPYVDLVNLLLTCGEDVKEAVTRSVQAQCEQSWGGLCSILSFCTSNIQRPPTAAPEHQPLADRAQLSRPHHRDTDHHLTANRGAKGERGSKSHPNAHARGRTGGQSAQGPSGSSEWEDEQSEYSDIRR.

The first 24 residues, 1–24 (MCAERLGQFVTLALVFATLDPAQG), serve as a signal peptide directing secretion. The segment at 21-44 (PAQGTDSTNPPEGPQDRSSQQKGR) is disordered. The span at 24-44 (GTDSTNPPEGPQDRSSQQKGR) shows a compositional bias: polar residues. N73 is a glycosylation site (N-linked (GlcNAc...) asparagine). Positions 218–296 (PPTAAPEHQP…EQSEYSDIRR (79 aa)) are disordered. The segment covering 240-258 (RDTDHHLTANRGAKGERGS) has biased composition (basic and acidic residues). Positions 272–282 (GQSAQGPSGSS) are enriched in low complexity.

The protein belongs to the stanniocalcin family. Homodimer; disulfide-linked. Found in a variety of tissues including skeletal muscle, small intestine, kidney, liver and brain.

It is found in the secreted. Functionally, has an anti-hypocalcemic action on calcium and phosphate homeostasis. The chain is Stanniocalcin-2 (Stc2) from Mus musculus (Mouse).